The primary structure comprises 396 residues: Protein ANTAGONIST OF LIKE HETEROCHROMATIN PROTEIN 1 (396 aa).

Composition is skewed to basic residues over residues 1-12 (MAPVKQKKKNKK) and 20-29 (KLAKNKEKKR). Positions 1-29 (MAPVKQKKKNKKKPLDKAKKLAKNKEKKR) are disordered. A Nuclear localization signal motif is present at residues 6–13 (QKKKNKKK). The DDE Tnp4 domain maps to 183-348 (IDTTHIIMTL…IILVCCLLHN (166 aa)).

This sequence belongs to the HARBI1 family. As to quaternary structure, interacts with core components of POLYCOMB REPRESSIVE COMPLEX 2 (PRC2), a PcG protein complex with H3K27me3 histone methyltransferase activity. Associates with plant-specific PRC2 accessory components such as MSI1, EMF2, VRN2, FIE and CLF. Requires a divalent metal cation as cofactor. In terms of tissue distribution, expressed in roots, inflorescence stems, seedlings, leaves, flower buds, inflorescences, and siliques.

It localises to the nucleus. Transposase-derived protein that may have nuclease activity. Antagonist of polycomb-group (PcG) protein-mediated chromatin silencing, probably by preventing the association of POLYCOMB REPRESSIVE COMPLEX 2 (PRC2) with its accessory components. Needed for full reactivation of several floral homeotic genes that are repressed by PcG. The sequence is that of Protein ANTAGONIST OF LIKE HETEROCHROMATIN PROTEIN 1 from Arabidopsis thaliana (Mouse-ear cress).